The following is a 364-amino-acid chain: Histidinol-phosphate aminotransferase 1 (364 aa).

K211 carries the post-translational modification N6-(pyridoxal phosphate)lysine.

The protein belongs to the class-II pyridoxal-phosphate-dependent aminotransferase family. Histidinol-phosphate aminotransferase subfamily. In terms of assembly, homodimer. Pyridoxal 5'-phosphate serves as cofactor.

The catalysed reaction is L-histidinol phosphate + 2-oxoglutarate = 3-(imidazol-4-yl)-2-oxopropyl phosphate + L-glutamate. It participates in amino-acid biosynthesis; L-histidine biosynthesis; L-histidine from 5-phospho-alpha-D-ribose 1-diphosphate: step 7/9. In Legionella pneumophila subsp. pneumophila (strain Philadelphia 1 / ATCC 33152 / DSM 7513), this protein is Histidinol-phosphate aminotransferase 1.